The chain runs to 408 residues: Neutral cholesterol ester hydrolase 1 (408 aa).

At 1 to 4 (MRSS) the chain is on the cytoplasmic side. Residues 5-25 (CVLLTALVALAAYYVYIPLPG) traverse the membrane as a helical; Signal-anchor for type II membrane protein segment. Residues 26–408 (SVSDPWKLML…SYIKWLDQNL (383 aa)) lie on the Lumenal side of the membrane. The short motif at 113–115 (HGG) is the Involved in the stabilization of the negatively charged intermediate by the formation of the oxyanion hole element. Residue S191 is part of the active site. Residues N270 and N287 are each glycosylated (N-linked (GlcNAc...) asparagine). Residues D348 and H378 contribute to the active site. N389 carries N-linked (GlcNAc...) asparagine glycosylation.

It belongs to the 'GDXG' lipolytic enzyme family. In terms of processing, N-glycosylated.

It is found in the cell membrane. It localises to the microsome. It catalyses the reaction a 1-O-alkyl-2-acetyl-sn-glycerol + H2O = a 1-O-alkyl-sn-glycerol + acetate + H(+). The catalysed reaction is 1-O-hexadecyl-2-acetyl-sn-glycerol + H2O = 1-O-hexadecyl-sn-glycerol + acetate + H(+). It carries out the reaction a cholesterol ester + H2O = cholesterol + a fatty acid + H(+). The enzyme catalyses cholesteryl (9Z-octadecenoate) + H2O = cholesterol + (9Z)-octadecenoate + H(+). Its function is as follows. Hydrolyzes 2-acetyl monoalkylglycerol ether (1-O-alkyl-2-acetyl-sn-glycerol), the penultimate precursor of the pathway for de novo synthesis of platelet-activating factor. May be responsible for the hydrolysis of cholesterol esters (such as cholesteryl (9Z-octadecenoate)) in macrophages. Also involved in organ detoxification by hydrolyzing exogenous organophosphorus compounds. This Pongo abelii (Sumatran orangutan) protein is Neutral cholesterol ester hydrolase 1 (NCEH1).